The chain runs to 217 residues: Probable rhamnogalacturonan acetylesterase YesY (217 aa).

Ser11 acts as the Nucleophile in catalysis. Active-site residues include Glu178 and His185.

The protein belongs to the 'GDSL' lipolytic enzyme family.

In terms of biological role, may play a role in the degradation of rhamnogalacturonan derived from plant cell walls. Probably has broad substrate specificity and may degrade several types of acetylated substrates. The chain is Probable rhamnogalacturonan acetylesterase YesY (yesY) from Bacillus subtilis (strain 168).